Reading from the N-terminus, the 272-residue chain is Putative pyruvate, phosphate dikinase regulatory protein (272 aa).

149–156 lines the ADP pocket; it reads GVSRTSKT.

This sequence belongs to the pyruvate, phosphate/water dikinase regulatory protein family. PDRP subfamily.

It carries out the reaction N(tele)-phospho-L-histidyl/L-threonyl-[pyruvate, phosphate dikinase] + ADP = N(tele)-phospho-L-histidyl/O-phospho-L-threonyl-[pyruvate, phosphate dikinase] + AMP + H(+). The catalysed reaction is N(tele)-phospho-L-histidyl/O-phospho-L-threonyl-[pyruvate, phosphate dikinase] + phosphate + H(+) = N(tele)-phospho-L-histidyl/L-threonyl-[pyruvate, phosphate dikinase] + diphosphate. Bifunctional serine/threonine kinase and phosphorylase involved in the regulation of the pyruvate, phosphate dikinase (PPDK) by catalyzing its phosphorylation/dephosphorylation. This chain is Putative pyruvate, phosphate dikinase regulatory protein, found in Lactiplantibacillus plantarum (strain ATCC BAA-793 / NCIMB 8826 / WCFS1) (Lactobacillus plantarum).